We begin with the raw amino-acid sequence, 283 residues long: Pantothenate synthetase (283 aa).

Residue 30 to 37 (MGYLHEGH) coordinates ATP. Histidine 37 serves as the catalytic Proton donor. Glutamine 61 is a (R)-pantoate binding site. A beta-alanine-binding site is contributed by glutamine 61. ATP is bound at residue 147–150 (GQKD). Glutamine 153 contacts (R)-pantoate. ATP contacts are provided by residues valine 176 and 184-187 (MSSR).

It belongs to the pantothenate synthetase family. In terms of assembly, homodimer.

It is found in the cytoplasm. It catalyses the reaction (R)-pantoate + beta-alanine + ATP = (R)-pantothenate + AMP + diphosphate + H(+). The protein operates within cofactor biosynthesis; (R)-pantothenate biosynthesis; (R)-pantothenate from (R)-pantoate and beta-alanine: step 1/1. Its function is as follows. Catalyzes the condensation of pantoate with beta-alanine in an ATP-dependent reaction via a pantoyl-adenylate intermediate. This chain is Pantothenate synthetase, found in Thermoanaerobacter pseudethanolicus (strain ATCC 33223 / 39E) (Clostridium thermohydrosulfuricum).